The primary structure comprises 673 residues: UvrABC system protein B (673 aa).

In terms of domain architecture, Helicase ATP-binding spans 26 to 183 (EGLEDGLAHQ…RRLAELQYTR (158 aa)). 39–46 (GVTGSGKT) contacts ATP. The Beta-hairpin signature appears at 92 to 115 (YYDYYQPEAYVPSSDTFIEKDASV). One can recognise a Helicase C-terminal domain in the interval 431 to 597 (QVDDLLSEIR…GLNKKVVDIL (167 aa)). One can recognise a UVR domain in the interval 633 to 668 (QQKIHELEGQMMQHAQNLEFEEAAQIRDQLHQLREL).

The protein belongs to the UvrB family. Forms a heterotetramer with UvrA during the search for lesions. Interacts with UvrC in an incision complex.

It localises to the cytoplasm. The UvrABC repair system catalyzes the recognition and processing of DNA lesions. A damage recognition complex composed of 2 UvrA and 2 UvrB subunits scans DNA for abnormalities. Upon binding of the UvrA(2)B(2) complex to a putative damaged site, the DNA wraps around one UvrB monomer. DNA wrap is dependent on ATP binding by UvrB and probably causes local melting of the DNA helix, facilitating insertion of UvrB beta-hairpin between the DNA strands. Then UvrB probes one DNA strand for the presence of a lesion. If a lesion is found the UvrA subunits dissociate and the UvrB-DNA preincision complex is formed. This complex is subsequently bound by UvrC and the second UvrB is released. If no lesion is found, the DNA wraps around the other UvrB subunit that will check the other stand for damage. The chain is UvrABC system protein B from Klebsiella pneumoniae subsp. pneumoniae (strain ATCC 700721 / MGH 78578).